A 557-amino-acid chain; its full sequence is Urocanate hydratase (557 aa).

NAD(+) is bound by residues 53-54 (GG), Q131, 177-179 (GMG), D197, R202, 243-244 (NA), 264-268 (QTSAH), 274-275 (YL), and Y323. C411 is a catalytic residue. G493 lines the NAD(+) pocket.

Belongs to the urocanase family. The cofactor is NAD(+).

Its subcellular location is the cytoplasm. The catalysed reaction is 4-imidazolone-5-propanoate = trans-urocanate + H2O. Its pathway is amino-acid degradation; L-histidine degradation into L-glutamate; N-formimidoyl-L-glutamate from L-histidine: step 2/3. Its function is as follows. Catalyzes the conversion of urocanate to 4-imidazolone-5-propionate. This is Urocanate hydratase from Hahella chejuensis (strain KCTC 2396).